The sequence spans 1370 residues: DNA-directed RNA polymerase subunit beta (1370 aa).

The protein belongs to the RNA polymerase beta chain family. In terms of assembly, the RNAP catalytic core consists of 2 alpha, 1 beta, 1 beta' and 1 omega subunit. When a sigma factor is associated with the core the holoenzyme is formed, which can initiate transcription.

It carries out the reaction RNA(n) + a ribonucleoside 5'-triphosphate = RNA(n+1) + diphosphate. DNA-dependent RNA polymerase catalyzes the transcription of DNA into RNA using the four ribonucleoside triphosphates as substrates. This is DNA-directed RNA polymerase subunit beta from Geotalea daltonii (strain DSM 22248 / JCM 15807 / FRC-32) (Geobacter daltonii).